A 307-amino-acid polypeptide reads, in one-letter code: Serine/threonine-protein phosphatase PP2A-5 catalytic subunit (307 aa).

Mn(2+) contacts are provided by aspartate 55, histidine 57, aspartate 83, and asparagine 115. Residue histidine 116 is the Proton donor of the active site. The Mn(2+) site is built by histidine 165 and histidine 239. The residue at position 307 (leucine 307) is a Leucine methyl ester.

The protein belongs to the PPP phosphatase family. PP-2A subfamily. PP2A consists of a common heterodimeric core enzyme, composed of a 36 kDa catalytic subunit (subunit C) and a 65 kDa constant regulatory subunit (subunit A), that associates with a variety of regulatory subunits such as subunits B (the R2/B/PR55/B55, R3/B''/PR72/PR130/PR59 and R5/B'/B56 families). Also interacts with CHIP and TAF12B. Interacts with B'THETA. Interacts with CLC-A, CLC-B, CLC-C and CLC-G. The cofactor is Mn(2+). In terms of processing, reversibly methyl esterified on Leu-307 by leucine carboxyl methyltransferase 1 (LCMT1) and pectin methylesterase 1 (PME1). Carboxyl methylation influences the affinity of the catalytic subunit for the different regulatory subunits, thereby modulating the PP2A holoenzyme's substrate specificity, enzyme activity and cellular localization. Post-translationally, phosphorylation of either threonine (by autophosphorylation-activated protein kinase) or tyrosine results in inactivation of the phosphatase. Auto-dephosphorylation has been suggested as a mechanism for reactivation. Ubiquitinated. CHIP-mediated ubiquitination enhances phosphatase activity after an abiotic stress such as low temperature or darkness.

Its subcellular location is the cytoplasm. It localises to the cytosol. It is found in the peroxisome. It carries out the reaction O-phospho-L-seryl-[protein] + H2O = L-seryl-[protein] + phosphate. The catalysed reaction is O-phospho-L-threonyl-[protein] + H2O = L-threonyl-[protein] + phosphate. Its function is as follows. Associates with the serine/threonine-protein phosphatase PP2A regulatory subunits A and B' to positively regulates beta-oxidation of fatty acids and protoauxins in peroxisomes by dephosphorylating peroxisomal beta-oxidation-related proteins. Involved in the positive regulation of salt stress responses. May function by increasing chloride channel activities on vacuolar membranes. This chain is Serine/threonine-protein phosphatase PP2A-5 catalytic subunit, found in Arabidopsis thaliana (Mouse-ear cress).